A 467-amino-acid polypeptide reads, in one-letter code: 2-succinylbenzoate--CoA ligase (467 aa).

This sequence belongs to the ATP-dependent AMP-binding enzyme family. MenE subfamily.

The catalysed reaction is 2-succinylbenzoate + ATP + CoA = 2-succinylbenzoyl-CoA + AMP + diphosphate. The protein operates within quinol/quinone metabolism; 1,4-dihydroxy-2-naphthoate biosynthesis; 1,4-dihydroxy-2-naphthoate from chorismate: step 5/7. It participates in quinol/quinone metabolism; menaquinone biosynthesis. In terms of biological role, converts 2-succinylbenzoate (OSB) to 2-succinylbenzoyl-CoA (OSB-CoA). This is 2-succinylbenzoate--CoA ligase from Listeria monocytogenes serotype 4b (strain F2365).